The primary structure comprises 106 residues: A-type ATP synthase subunit F (106 aa).

It belongs to the V-ATPase F subunit family. In terms of assembly, has multiple subunits with at least A(3), B(3), C, D, E, F, H, I and proteolipid K(x).

The protein localises to the cell membrane. Functionally, component of the A-type ATP synthase that produces ATP from ADP in the presence of a proton gradient across the membrane. This chain is A-type ATP synthase subunit F, found in Methanosphaera stadtmanae (strain ATCC 43021 / DSM 3091 / JCM 11832 / MCB-3).